Consider the following 467-residue polypeptide: Fumarate hydratase class II (467 aa).

Residues 98-100 (SGT), R126, 129-132 (HPND), 139-141 (SSN), and T187 each bind substrate. The Proton donor/acceptor role is filled by H188. Residue S318 is part of the active site. Substrate-binding positions include S319 and 324-326 (KVN).

This sequence belongs to the class-II fumarase/aspartase family. Fumarase subfamily. As to quaternary structure, homotetramer.

It localises to the cytoplasm. The enzyme catalyses (S)-malate = fumarate + H2O. Its pathway is carbohydrate metabolism; tricarboxylic acid cycle; (S)-malate from fumarate: step 1/1. Its function is as follows. Involved in the TCA cycle. Catalyzes the stereospecific interconversion of fumarate to L-malate. This is Fumarate hydratase class II from Salmonella typhimurium (strain LT2 / SGSC1412 / ATCC 700720).